Reading from the N-terminus, the 2871-residue chain is Fibrillin-1 (2871 aa).

The N-terminal stretch at 1–24 (MRRGRLLEVALGFTVLLASYTSHR) is a signal peptide. Positions 25 to 44 (AEANLEAGNGKETRASRAKR) are excised as a propeptide. Positions 29 to 39 (LEAGNGKETRA) are enriched in basic and acidic residues. Residues 29–49 (LEAGNGKETRASRAKRRGGGG) are disordered. The segment at 45–81 (RGGGGHDALKGPNVCGSRYNAYCCPGWKTLPGGNQCI) is fibrillin unique N-terminal (FUN) domain. Residues 45–450 (RGGGGHDALK…PPRVLPVNVT (406 aa)) are N-terminal domain. 11 cysteine pairs are disulfide-bonded: Cys-59/Cys-68, Cys-67/Cys-80, Cys-85/Cys-94, Cys-89/Cys-100, Cys-102/Cys-111, Cys-119/Cys-129, Cys-123/Cys-134, Cys-136/Cys-145, Cys-150/Cys-160, Cys-154/Cys-166, and Cys-168/Cys-177. EGF-like domains are found at residues 81–112 (IVPICRHSCGDGFCSRPNMCTCPSGQIAPSCG), 115–146 (SIQHCNIRCMNGGSCSDDHCLCQKGYIGTHCG), and 147–178 (QPVCESGCLNGGRCVAPNRCACTYGFTGPQCE). The interval 119 to 329 (CNIRCMNGGS…YTSPDGTRCI (211 aa)) is interaction with MFAP4. One can recognise a TB 1 domain in the interval 184-236 (GPCFTVVSNQMCQGQLSGIVCTKTLCCATVGRAWGHPCEMCPAQPHPCRRGFI). Residues 195-221 (CQGQLSGIVCTKTLCCATVGRAWGHPC) are hybrid domain 1. An EGF-like 4; calcium-binding domain is found at 246–287 (DVDECQAIPGLCQGGNCINTVGSFECKCPAGHKFNEVSQKCE). 6 disulfide bridges follow: Cys-250–Cys-262, Cys-257–Cys-271, Cys-273–Cys-286, Cys-292–Cys-304, Cys-299–Cys-313, and Cys-315–Cys-328. Ser-268 carries an O-linked (Glc) serine glycan. In terms of domain architecture, EGF-like 5; calcium-binding spans 288-329 (DIDECSTIPGICDGGECTNTVSSYFCKCPPGFYTSPDGTRCI). The TB 2 domain occupies 334 to 389 (GYCYTALTNGRCSNQLPQSITKMQCCCDVGRCWSPGVTVTPEMCPIRATEDFNKLC). N-linked (GlcNAc...) asparagine glycosylation occurs at Asn-448. The EGF-like 6 domain maps to 449–489 (VTDYCQLFRYLCHNGRCIPTPGSYRCECNKGFQLDLRGECI). 15 disulfides stabilise this stretch: Cys-453-Cys-465, Cys-460-Cys-474, Cys-476-Cys-488, Cys-494-Cys-504, Cys-499-Cys-513, Cys-515-Cys-528, Cys-534-Cys-546, Cys-541-Cys-555, Cys-557-Cys-570, Cys-576-Cys-587, Cys-582-Cys-596, Cys-598-Cys-611, Cys-617-Cys-628, Cys-623-Cys-637, and Cys-639-Cys-652. The O-linked (Glc) serine glycan is linked to Ser-471. The 40-residue stretch at 490–529 (DVDECEKNPCAGGECINNQGSYTCQCRPGYQSTLTRTECR) folds into the EGF-like 7; calcium-binding domain. O-linked (Glc) serine glycosylation is present at Ser-510. The EGF-like 8; calcium-binding domain occupies 530 to 571 (DIDECLQNGRICNNGRCINTDGSFHCVCNAGFHVTRDGKNCE). One can recognise an EGF-like 9; calcium-binding domain in the interval 572–612 (DMDECSIRNMCLNGMCINEDGSFKCICKPGFQLASDGRYCK). Residues 613-653 (DINECETSGICMNGRCVNTDGSYRCECFPGLAVGLDGRVCV) form the EGF-like 10; calcium-binding domain. A TB 3 domain is found at 659–711 (STCYGGYKRGQCVKPLFGAVTKSECCCASTEYAFGEPCQPCPSQNSAEYQALC). The EGF-like 11; calcium-binding domain maps to 723–764 (DINECALDPDICPNGICENLRGTYKCICNSGYEVDSTGKNCV). Disulfide bonds link Cys-727-Cys-739, Cys-734-Cys-748, Cys-750-Cys-763, Cys-769-Cys-781, Cys-776-Cys-790, Cys-792-Cys-805, Cys-811-Cys-821, Cys-816-Cys-830, Cys-832-Cys-845, Cys-853-Cys-875, Cys-862-Cys-887, Cys-876-Cys-890, Cys-896-Cys-908, Cys-914-Cys-926, Cys-921-Cys-935, and Cys-937-Cys-950. Residues 765 to 806 (DINECVLNSLLCDNGQCRNTPGSFVCTCPKGFIYKPDLKTCE) enclose the EGF-like 12; calcium-binding domain. Residues 807–846 (DIDECESSPCINGVCKNSPGSFICECSSESTLDPTKTICI) form the EGF-like 13; calcium-binding domain. Residues 851 to 902 (GTCWQTIIDGRCEININGATLKSQCCSSLGAAWGSPCTPCQVDPICGKGYSR) form the TB 4 domain. Residues 862–887 (CEININGATLKSQCCSSLGAAWGSPC) are hybrid domain 2. The EGF-like 14; calcium-binding domain maps to 910 to 951 (DIDECEVFPGVCKNGLCVNSKGSFKCQCPNGMTLDATGRICL). Positions 956-1008 (ETCFLRYEDEECTLPVVGRHRMDACCCSVGAAWGTEECEECPPRNTPEYEELC) constitute a TB 5 domain. Residues 1028 to 1069 (DINECKMIPNLCTHGKCRNTIGSFKCRCDSGFALDSEERNCI) form the EGF-like 15; calcium-binding domain. Cystine bridges form between Cys-1032-Cys-1044, Cys-1039-Cys-1053, Cys-1055-Cys-1068, Cys-1074-Cys-1086, Cys-1081-Cys-1095, Cys-1097-Cys-1111, Cys-1117-Cys-1129, Cys-1124-Cys-1138, Cys-1140-Cys-1153, Cys-1159-Cys-1171, Cys-1201-Cys-1212, Cys-1208-Cys-1221, Cys-1223-Cys-1236, Cys-1242-Cys-1254, Cys-1249-Cys-1263, Cys-1265-Cys-1278, Cys-1284-Cys-1296, Cys-1291-Cys-1305, Cys-1307-Cys-1320, Cys-1326-Cys-1339, Cys-1333-Cys-1348, Cys-1350-Cys-1361, Cys-1367-Cys-1380, Cys-1374-Cys-1389, Cys-1391-Cys-1402, Cys-1408-Cys-1420, Cys-1415-Cys-1429, Cys-1450-Cys-1461, Cys-1456-Cys-1470, Cys-1472-Cys-1485, Cys-1491-Cys-1502, Cys-1497-Cys-1511, Cys-1513-Cys-1526, Cys-1534-Cys-1562, Cys-1549-Cys-1574, Cys-1563-Cys-1577, Cys-1564-Cys-1589, Cys-1610-Cys-1622, Cys-1617-Cys-1631, Cys-1633-Cys-1646, Cys-1652-Cys-1663, Cys-1658-Cys-1672, and Cys-1674-Cys-1687. Positions 1070 to 1112 (DIDECRISPDLCGRGQCVNTPGDFECKCDEGYESGFMMMKNCM) constitute an EGF-like 16; calcium-binding domain. The 42-residue stretch at 1113–1154 (DIDECQRDPLLCRGGVCLNTEGSYRCECPSGHQMSPNISACI) folds into the EGF-like 17; calcium-binding domain. Residue Ser-1135 is glycosylated (O-linked (Glc) serine). The N-linked (GlcNAc...) asparagine glycan is linked to Asn-1149. An EGF-like 18; calcium-binding domain is found at 1155-1196 (DINECELSAHLCPHGRCVNLIGKYQRARNPGYHSTPDRLFCV). The 41-residue stretch at 1197-1237 (DIDECSIMNGGCETFCTNSEGSYECSCQPGFALMPDQRSCT) folds into the EGF-like 19; calcium-binding domain. Ser-1218 carries O-linked (Glc) serine glycosylation. An EGF-like 20; calcium-binding domain is found at 1238-1279 (DIDECEDNPNICDGGQCTNIPGEYRCLCYDGFMASEDMKTCV). The 42-residue stretch at 1280–1321 (DVNECDLNPNICLSGTCENTKGSFICHCDMGYSGKKGKTGCT) folds into the EGF-like 21; calcium-binding domain. A glycan (O-linked (Glc) serine) is linked at Ser-1302. In terms of domain architecture, EGF-like 22; calcium-binding spans 1322–1362 (DINECEIGAHNCDRHAVCTNTAGSFNCSCSPGWIGDGIKCT). A glycan (O-linked (Glc) serine) is linked at Ser-1345. An N-linked (GlcNAc...) asparagine glycan is attached at Asn-1347. Residues 1363–1403 (DLDECSNGTHMCSQHADCKNTMGSYRCLCKEGYTGDGFTCA) enclose the EGF-like 23; calcium-binding domain. The N-linked (GlcNAc...) asparagine glycan is linked to Asn-1369. Ser-1386 carries an O-linked (Glc) serine glycan. The region spanning 1404–1445 (DLDECSENVKLCGNVQCLYAPGGYHCEYDMGFVPSADRKSCV) is the EGF-like 24; calcium-binding domain. The EGF-like 25; calcium-binding domain occupies 1446-1486 (DSDECSLPNICVFGTCHNLPGLFRCECEIGYELDRSGGNCT). N-linked (GlcNAc...) asparagine glycosylation occurs at Asn-1484. The EGF-like 26; calcium-binding domain maps to 1487–1527 (DVNECLEPPTCISGNCVNTPGSYTCVCPPDFELNPTRVGCV). Ser-1508 is a glycosylation site (O-linked (Glc) serine). A C-terminal domain region spans residues 1528-2731 (DTRSGNCYLD…GYPKRGRKRR (1204 aa)). The TB 6 domain maps to 1532–1589 (GNCYLDVRPRGDNGDTACSNEIGVGVSKASCCCSLGKAWGTPCEQCPPVNTSEYKILC). The Cell attachment site motif lies at 1541–1543 (RGD). N-linked (GlcNAc...) asparagine glycosylation is present at Asn-1581. An EGF-like 27; calcium-binding domain is found at 1606 to 1647 (DIDECQELPGLCQGGKCINTFGSFQCRCPTGYYLNEDTRVCD). Ser-1628 carries an O-linked (Glc) serine glycan. Residues 1648-1688 (DVNECETPGICGPGTCYNTVGNYTCICPPDYMQVNGGNNCM) enclose the EGF-like 28; calcium-binding domain. An N-linked (GlcNAc...) asparagine glycan is attached at Asn-1669. One can recognise a TB 7 domain in the interval 1693 to 1748 (SLCYRNYYADNQTCDGELLFNMTKKMCCCSYNIGRAWNKPCEQCPIPSTDEFATLC). 2 N-linked (GlcNAc...) asparagine glycosylation sites follow: Asn-1703 and Asn-1713. The 42-residue stretch at 1766–1807 (DIDECREIPGVCENGVCINMVGSFRCECPVGFFYNDKLLVCE) folds into the EGF-like 29; calcium-binding domain. 40 disulfides stabilise this stretch: Cys-1770–Cys-1782, Cys-1777–Cys-1791, Cys-1793–Cys-1806, Cys-1812–Cys-1824, Cys-1818–Cys-1833, Cys-1835–Cys-1847, Cys-1853–Cys-1865, Cys-1860–Cys-1874, Cys-1876–Cys-1889, Cys-1895–Cys-1905, Cys-1900–Cys-1914, Cys-1916–Cys-1928, Cys-1934–Cys-1947, Cys-1942–Cys-1956, Cys-1958–Cys-1971, Cys-1977–Cys-1989, Cys-1984–Cys-1998, Cys-2000–Cys-2011, Cys-2017–Cys-2029, Cys-2024–Cys-2038, Cys-2040–Cys-2053, Cys-2061–Cys-2083, Cys-2070–Cys-2096, Cys-2084–Cys-2099, Cys-2085–Cys-2111, Cys-2131–Cys-2142, Cys-2137–Cys-2151, Cys-2153–Cys-2164, Cys-2170–Cys-2181, Cys-2176–Cys-2190, Cys-2192–Cys-2204, Cys-2210–Cys-2221, Cys-2217–Cys-2230, Cys-2232–Cys-2245, Cys-2251–Cys-2265, Cys-2258–Cys-2274, Cys-2276–Cys-2289, Cys-2295–Cys-2307, Cys-2302–Cys-2316, and Cys-2318–Cys-2331. The 41-residue stretch at 1808-1848 (DIDECQNGPVCQRNAECINTAGSYRCDCKPGYRFTSTGQCN) folds into the EGF-like 30; calcium-binding domain. An O-linked (Glc) serine glycan is attached at Ser-1830. One can recognise an EGF-like 31; calcium-binding domain in the interval 1849–1890 (DRNECQEIPNICSHGQCIDTVGSFYCLCHTGFKTNADQTMCL). O-linked (Glc) serine glycosylation occurs at Ser-1871. In terms of domain architecture, EGF-like 32; calcium-binding spans 1891–1929 (DINECERDACGNGTCRNTIGSFNCRCNHGFILSHNNDCI). Asn-1902 is a glycosylation site (N-linked (GlcNAc...) asparagine). Ser-1911 carries an O-linked (Glc) serine glycan. An EGF-like 33; calcium-binding domain is found at 1930–1972 (DVDECATGNGNLCRNGQCINTVGSFQCQCNEGYEVAPDGRTCV). Residue Ser-1953 is glycosylated (O-linked (Glc) serine). In terms of domain architecture, EGF-like 34; calcium-binding spans 1973 to 2012 (DINECLLEPGKCAPGTCQNLDGSYRCICPPGYSLQNDKCE). The EGF-like 35; calcium-binding domain maps to 2013 to 2054 (DIDECVEEPEICALGTCSNTEGSFKCLCPDGFSLSSTGRRCQ). An O-linked (Glc) serine glycan is attached at Ser-2035. The region spanning 2059–2111 (SYCYAKFEGGKCSSPKSRNHSKQECCCALKGEGWGDPCELCPTEPDEAFRQIC) is the TB 8 domain. Asn-2077 is a glycosylation site (N-linked (GlcNAc...) asparagine). One can recognise an EGF-like 36; calcium-binding domain in the interval 2127–2165 (DMDECKEPDVCKHGQCINTDGSYRCECPFGYILEGNECV). Ser-2148 carries O-linked (Glc) serine glycosylation. Residues 2166–2205 (DTDECSVGNPCGNGTCKNVIGGFECTCEEGFEPGPMMTCE) enclose the EGF-like 37; calcium-binding domain. Residue Asn-2178 is glycosylated (N-linked (GlcNAc...) asparagine). An EGF-like 38; calcium-binding domain is found at 2206–2246 (DINECAQNPLLCAFRCVNTYGSYECKCPTGYVLREDRRMCK). Residue Ser-2227 is glycosylated (O-linked (Glc) serine). The 44-residue stretch at 2247–2290 (DEDECEEGKHDCAEKQMECKNLIGMYICICGPGYQRRPDGEGCV) folds into the EGF-like 39; calcium-binding domain. An EGF-like 40; calcium-binding domain is found at 2291 to 2332 (DENECQTKPGICENGRCLNTRGSYTCECNDGFTASPTQDECL). O-linked (Glc) serine glycosylation occurs at Ser-2313. The TB 9 domain maps to 2337 to 2390 (GYCFTEVLQNMCQIGSSNRNPVTKSECCCDGGRGWGPHCEICPFQGTVAFKKLC). The region spanning 2402-2443 (DIDECKVIHDVCRNGECINDRGSYHCICKTGYTPDITGTACV) is the EGF-like 41; calcium-binding domain. 21 disulfide bridges follow: Cys-2406-Cys-2418, Cys-2413-Cys-2427, Cys-2429-Cys-2442, Cys-2448-Cys-2459, Cys-2455-Cys-2468, Cys-2470-Cys-2483, Cys-2489-Cys-2500, Cys-2496-Cys-2509, Cys-2511-Cys-2522, Cys-2528-Cys-2541, Cys-2535-Cys-2550, Cys-2552-Cys-2565, Cys-2571-Cys-2581, Cys-2577-Cys-2590, Cys-2592-Cys-2605, Cys-2611-Cys-2622, Cys-2617-Cys-2631, Cys-2633-Cys-2646, Cys-2652-Cys-2663, Cys-2659-Cys-2672, and Cys-2674-Cys-2686. The 41-residue stretch at 2444–2484 (DLNECNQAPKPCNFICKNTEGSYQCSCPKGYILQEDGRSCK) folds into the EGF-like 42; calcium-binding domain. Residue Ser-2465 is glycosylated (O-linked (Glc) serine). Residues 2485 to 2523 (DLDECATKQHNCQFLCVNTIGSFACKCPPGFTQHHTACI) enclose the EGF-like 43; calcium-binding domain. An EGF-like 44; calcium-binding domain is found at 2524-2566 (DNNECTSDINLCGAKGICQNTPGSFTCECQRGFSLDQSGASCE). Ser-2547 carries O-linked (Glc) serine glycosylation. The EGF-like 45; calcium-binding domain occupies 2567–2606 (DVDECEGNHRCQHGCQNIIGGYRCSCPQGYLQHYQWNQCV). An EGF-like 46; calcium-binding domain is found at 2607–2647 (DENECLSAHICGGASCHNTLGSYKCMCPAGFQYEQFSGGCQ). Ser-2628 is a glycosylation site (O-linked (Glc) serine). The 40-residue stretch at 2648 to 2687 (DINECGSSQAPCSYGCSNTEGGYLCGCPPGYFRIGQGHCV) folds into the EGF-like 47; calcium-binding domain. Phosphoserine occurs at positions 2702 and 2709. N-linked (GlcNAc...) asparagine glycans are attached at residues Asn-2734, Asn-2750, and Asn-2767.

The protein belongs to the fibrillin family. Interacts with COL16A1. Interacts with integrin alpha-V/beta-3. Interacts with ADAMTS10; this interaction promotes microfibril assembly. Interacts with THSD4; this interaction promotes fibril formation. Interacts (via N-terminal domain) with FBLN2 and FBLN5. Interacts with ELN. Forms a ternary complex with ELN and FBLN2 or FBLN5 and a significant interaction with ELN seen only in the presence of FBLN2 or FBLN5. Interacts (via N-terminal domain) with LTBP2 (via C-terminal domain) in a Ca(+2)-dependent manner. Interacts (via N-terminal domain) with LTBP1 (via C-terminal domain). Interacts with integrins ITGA5:ITGB1, ITGAV:ITGB3 and ITGAV:ITGB6. Interacts (via N-terminal domain) with BMP2, BMP4, BMP7, BMP10 and GDF5. Interacts (via N-terminal domain) with MFAP2 and MFAP5. Interacts with ADAMTSL5. Interacts with MFAP4. Interacts (via N-terminal domain) with TNFSF11 in a Ca(+2)-dependent manner. Interacts (via N-terminal domain) with EFEMP2; this interaction inhibits EFEMP2 binding to LOX and ELN. Cleavage of N- and C-terminus by furin is required for incorporation into the extracellular matrix and assembly into microfibrils. The C-terminus, which corresponds to the Asprosin chain, was initially thought to constitute a propeptide. Fibrillin-1 and Asprosin chains are still linked together during the secretion from cells, but are subsequently separated by furin, an essential step for incorporation of Fibrillin-1 into the nascent microfibrils. Post-translationally, forms intermolecular disulfide bonds either with other fibrillin-1 molecules or with other components of the microfibrils. In terms of processing, O-glycosylated on serine residues by POGLUT2 and POGLUT3 which is necessary for efficient protein secretion.

The protein resides in the secreted. Its subcellular location is the extracellular space. It is found in the extracellular matrix. Structural component of the 10-12 nm diameter microfibrils of the extracellular matrix, which conveys both structural and regulatory properties to load-bearing connective tissues. Fibrillin-1-containing microfibrils provide long-term force bearing structural support. In tissues such as the lung, blood vessels and skin, microfibrils form the periphery of the elastic fiber, acting as a scaffold for the deposition of elastin. In addition, microfibrils can occur as elastin-independent networks in tissues such as the ciliary zonule, tendon, cornea and glomerulus where they provide tensile strength and have anchoring roles. Fibrillin-1 also plays a key role in tissue homeostasis through specific interactions with growth factors, such as the bone morphogenetic proteins (BMPs), growth and differentiation factors (GDFs) and latent transforming growth factor-beta-binding proteins (LTBPs), cell-surface integrins and other extracellular matrix protein and proteoglycan components. Regulates osteoblast maturation by controlling TGF-beta bioavailability and calibrating TGF-beta and BMP levels, respectively. Negatively regulates osteoclastogenesis by binding and sequestering an osteoclast differentiation and activation factor TNFSF11. This leads to disruption of TNFSF11-induced Ca(2+) signaling and impairment of TNFSF11-mediated nuclear translocation and activation of transcription factor NFATC1 which regulates genes important for osteoclast differentiation and function. Mediates cell adhesion via its binding to cell surface receptors integrins ITGAV:ITGB3 and ITGA5:ITGB1. Binds heparin and this interaction plays an important role in the assembly of microfibrils. Its function is as follows. Hormone that targets the liver to increase plasma glucose levels. Secreted by white adipose tissue and circulates in the plasma. Acts in response to fasting and promotes blood glucose elevation by binding to the surface of hepatocytes. Promotes hepatocyte glucose release by activating the protein kinase A activity in the liver, resulting in rapid glucose release into the circulation. The chain is Fibrillin-1 from Sus scrofa (Pig).